The chain runs to 308 residues: tRNA dimethylallyltransferase (308 aa).

ATP is bound at residue Gly10–Thr17. Thr12–Thr17 contacts substrate. The tract at residues Asp35 to Gln38 is interaction with substrate tRNA.

It belongs to the IPP transferase family. Monomer. Mg(2+) is required as a cofactor.

It catalyses the reaction adenosine(37) in tRNA + dimethylallyl diphosphate = N(6)-dimethylallyladenosine(37) in tRNA + diphosphate. In terms of biological role, catalyzes the transfer of a dimethylallyl group onto the adenine at position 37 in tRNAs that read codons beginning with uridine, leading to the formation of N6-(dimethylallyl)adenosine (i(6)A). This is tRNA dimethylallyltransferase from Fervidobacterium nodosum (strain ATCC 35602 / DSM 5306 / Rt17-B1).